Reading from the N-terminus, the 328-residue chain is Malate dehydrogenase (328 aa).

NAD(+) is bound at residue 11–17 (GAAGQIG). Positions 94 and 100 each coordinate substrate. Residues N107, Q114, and 131–133 (VGN) each bind NAD(+). N133 and R164 together coordinate substrate. H189 (proton acceptor) is an active-site residue.

This sequence belongs to the LDH/MDH superfamily. MDH type 2 family.

It catalyses the reaction (S)-malate + NAD(+) = oxaloacetate + NADH + H(+). Catalyzes the reversible oxidation of malate to oxaloacetate. This is Malate dehydrogenase from Xylella fastidiosa (strain 9a5c).